The sequence spans 37 residues: Large ribosomal subunit protein bL36 (37 aa).

The protein belongs to the bacterial ribosomal protein bL36 family.

The sequence is that of Large ribosomal subunit protein bL36 from Aliarcobacter butzleri (strain RM4018) (Arcobacter butzleri).